The chain runs to 1423 residues: DNA-directed RNA polymerase subunit beta' (1423 aa).

Zn(2+)-binding residues include Cys-70, Cys-72, Cys-85, and Cys-88. Residues Asp-461, Asp-463, and Asp-465 each contribute to the Mg(2+) site. Residues Cys-809, Cys-883, Cys-890, and Cys-893 each coordinate Zn(2+). The tract at residues 1383–1423 (EEHAAELRQPVQADTGDDPLGAVVGESHGTDADAGDYLTEE) is disordered.

The protein belongs to the RNA polymerase beta' chain family. In terms of assembly, the RNAP catalytic core consists of 2 alpha, 1 beta, 1 beta' and 1 omega subunit. When a sigma factor is associated with the core the holoenzyme is formed, which can initiate transcription. It depends on Mg(2+) as a cofactor. The cofactor is Zn(2+).

It catalyses the reaction RNA(n) + a ribonucleoside 5'-triphosphate = RNA(n+1) + diphosphate. Functionally, DNA-dependent RNA polymerase catalyzes the transcription of DNA into RNA using the four ribonucleoside triphosphates as substrates. The chain is DNA-directed RNA polymerase subunit beta' from Rhizorhabdus wittichii (strain DSM 6014 / CCUG 31198 / JCM 15750 / NBRC 105917 / EY 4224 / RW1) (Sphingomonas wittichii).